Reading from the N-terminus, the 294-residue chain is Sulfotransferase 1E1 (294 aa).

47 to 52 lines the 3'-phosphoadenylyl sulfate pocket; that stretch reads KSGTTW. 105-107 is a substrate binding site; it reads KTH. His-107 (proton acceptor) is an active-site residue. 3'-phosphoadenylyl sulfate contacts are provided by residues Arg-129, Ser-137, Tyr-192, 226-231, and 256-258; these read TSFQEM and RKG.

Belongs to the sulfotransferase 1 family. Homodimer. As to expression, liver, intestine and at lower level in the kidney.

Its subcellular location is the cytoplasm. It is found in the cytosol. The enzyme catalyses estrone + 3'-phosphoadenylyl sulfate = estrone 3-sulfate + adenosine 3',5'-bisphosphate + H(+). The catalysed reaction is (24S)-hydroxycholesterol + 3'-phosphoadenylyl sulfate = (24S)-hydroxycholesterol 3-sulfate + adenosine 3',5'-bisphosphate + H(+). It catalyses the reaction 17beta-estradiol + 3'-phosphoadenylyl sulfate = 17beta-estradiol 3-sulfate + adenosine 3',5'-bisphosphate + H(+). It carries out the reaction 3beta-hydroxyandrost-5-en-17-one + 3'-phosphoadenylyl sulfate = dehydroepiandrosterone 3-sulfate + adenosine 3',5'-bisphosphate + H(+). The enzyme catalyses 4-ethylphenol + 3'-phosphoadenylyl sulfate = 4-ethylphenyl sulfate + adenosine 3',5'-bisphosphate + H(+). With respect to regulation, inhibited by estradiol. In terms of biological role, sulfotransferase that utilizes 3'-phospho-5'-adenylyl sulfate (PAPS) as sulfonate donor to catalyze the sulfate conjugation of estradiol and estrone. Is a key enzyme in estrogen homeostasis, the sulfation of estrogens leads to their inactivation. Also sulfates dehydroepiandrosterone (DHEA), pregnenolone, (24S)-hydroxycholesterol and xenobiotic compounds like ethinylestradiol, equalenin, diethyl stilbesterol and 1-naphthol at significantly lower efficiency. Does not sulfonate cortisol, testosterone and dopamine. May play a role in gut microbiota-host metabolic interaction. O-sulfonates 4-ethylphenol (4-EP), a dietary tyrosine-derived metabolite produced by gut bacteria. The product 4-EPS crosses the blood-brain barrier and may negatively regulate oligodendrocyte maturation and myelination, affecting the functional connectivity of different brain regions associated with the limbic system. The protein is Sulfotransferase 1E1 (SULT1E1) of Homo sapiens (Human).